The primary structure comprises 482 residues: MMETMPNWLKQRAFLTPDRTAIEIEEEKVTFMQLHEKVVSVCEHLTHVGVKRGQKVAVLMKNGMEMITVIHALSYVGAVAVLLNTRLSREELLWQMDDAEVICLVTDQDFEAKDIPVYSFAEVMNGPKEEASIQEEFSLREAMTIIYTSGTTGKPKGVILTYGNHWASAVGSSLNLGLRDDDCWLACMPMFHVGGLSLLMKNIMYGMRILLVPKYDADFIHKALQTRGVTIISVVSKMLTDLLERLGEGTYPSSLRCMLLGGGPAPKPLLETCVDKGIPVYQTYGMTETSSQICTLSADYMLTKVGSAGKPLFQCQLRIEKDGVVVPPFAEGEIVVKGPNVTGGYFNREDATRETIQNGWLHTGDLGYLDEEGFLYVLDRRSDLIISGGENIYPAQIEEVLLSHPMVAEAGVVGMTDDKWGQVPAAFVVKSGEVTEEEILHFCEEKLAKYKVPKKACFLEELPRNASKKLLRRELRQLVEEM.

It belongs to the ATP-dependent AMP-binding enzyme family. MenE subfamily.

It catalyses the reaction 2-succinylbenzoate + ATP + CoA = 2-succinylbenzoyl-CoA + AMP + diphosphate. The protein operates within quinol/quinone metabolism; 1,4-dihydroxy-2-naphthoate biosynthesis; 1,4-dihydroxy-2-naphthoate from chorismate: step 5/7. It participates in quinol/quinone metabolism; menaquinone biosynthesis. Converts 2-succinylbenzoate (OSB) to 2-succinylbenzoyl-CoA (OSB-CoA). This chain is 2-succinylbenzoate--CoA ligase, found in Bacillus thuringiensis subsp. konkukian (strain 97-27).